The following is a 469-amino-acid chain: 6-phosphofructo-2-kinase/fructose-2,6-bisphosphatase 4 (469 aa).

The tract at residues 1–249 (MASPRELTQN…YYLMNIHVTP (249 aa)) is 6-phosphofructo-2-kinase. 46–54 (GLPARGKTY) provides a ligand contact to ATP. Residues arginine 79 and arginine 103 each contribute to the beta-D-fructose 6-phosphate site. The active site involves aspartate 129. Beta-D-fructose 6-phosphate-binding residues include threonine 131 and arginine 137. Cysteine 159 is an active-site residue. Residue 168–173 (NIVQVK) participates in ATP binding. The beta-D-fructose 6-phosphate site is built by lysine 173, arginine 194, and tyrosine 198. The tract at residues 250 to 469 (RSIYLCRHGE…EALVTVPAHQ (220 aa)) is fructose-2,6-bisphosphatase. Arginine 256 provides a ligand contact to beta-D-fructose 2,6-bisphosphate. Histidine 257 serves as the catalytic Tele-phosphohistidine intermediate. 3 residues coordinate beta-D-fructose 2,6-bisphosphate: asparagine 263, glycine 269, and arginine 306. Glutamate 326 functions as the Proton donor/acceptor in the catalytic mechanism. Residues tyrosine 337, arginine 351, lysine 355, tyrosine 366, glutamine 392, and arginine 396 each contribute to the beta-D-fructose 2,6-bisphosphate site. 348 to 351 (FALR) contributes to the ATP binding site. Residues 392 to 396 (QAVMR) and tyrosine 428 contribute to the ATP site. Position 444 is a phosphothreonine; by PKC (threonine 444).

It in the C-terminal section; belongs to the phosphoglycerate mutase family. As to quaternary structure, homodimer.

It catalyses the reaction beta-D-fructose 2,6-bisphosphate + H2O = beta-D-fructose 6-phosphate + phosphate. The enzyme catalyses beta-D-fructose 6-phosphate + ATP = beta-D-fructose 2,6-bisphosphate + ADP + H(+). With respect to regulation, the most important regulatory mechanism of these opposing activities is by phosphorylation and dephosphorylation of the enzyme. In terms of biological role, synthesis and degradation of fructose 2,6-bisphosphate. The sequence is that of 6-phosphofructo-2-kinase/fructose-2,6-bisphosphatase 4 (PFKFB4) from Macaca fascicularis (Crab-eating macaque).